A 478-amino-acid polypeptide reads, in one-letter code: Protein adenylyltransferase VbhT (478 aa).

Positions 55 to 200 (FDLDHMKKIH…RRNLTEFTVN (146 aa)) constitute a Fido domain. Residues 85 to 88 (KDNS), 133 to 136 (NALH), 140 to 147 (EGNGRTLR), and serine 175 each bind ATP.

As to quaternary structure, homodimer. Interacts with VbhA.

The catalysed reaction is L-tyrosyl-[protein] + ATP = O-(5'-adenylyl)-L-tyrosyl-[protein] + diphosphate. The enzyme catalyses L-threonyl-[protein] + ATP = 3-O-(5'-adenylyl)-L-threonyl-[protein] + diphosphate. Its activity is regulated as follows. Adenylyltransferase activity is inhibited by antitoxin VbhA; which acts by competing with ATP-binding at Arg-147 and prevents productive ATP-binding. Its function is as follows. Toxic component of type II toxin-antitoxin (TA) system VbhT-VbhA. Adenylyltransferase involved in virulence by mediating the addition of adenosine 5'-monophosphate (AMP) to specific residue of host GTPases. The resulting AMPylation affects GTPases, impairing actin assembly in infected cells. This chain is Protein adenylyltransferase VbhT (vbhT), found in Bartonella schoenbuchensis (strain DSM 13525 / NCTC 13165 / R1).